Reading from the N-terminus, the 158-residue chain is Inorganic pyrophosphatase (158 aa).

Mg(2+) is bound at residue glutamate 8. Lysine 16, arginine 30, and tyrosine 42 together coordinate substrate. 4 residues coordinate Mg(2+): aspartate 52, aspartate 57, aspartate 84, and aspartate 89. Aspartate 89 acts as the Proton acceptor in catalysis. Substrate is bound at residue tyrosine 125.

It belongs to the PPase family. As to quaternary structure, homohexamer. Mg(2+) serves as cofactor.

The protein localises to the cytoplasm. The catalysed reaction is diphosphate + H2O = 2 phosphate + H(+). Catalyzes the hydrolysis of inorganic pyrophosphate (PPi) forming two phosphate ions. In Corynebacterium glutamicum (strain ATCC 13032 / DSM 20300 / JCM 1318 / BCRC 11384 / CCUG 27702 / LMG 3730 / NBRC 12168 / NCIMB 10025 / NRRL B-2784 / 534), this protein is Inorganic pyrophosphatase.